A 196-amino-acid chain; its full sequence is Imidazoleglycerol-phosphate dehydratase (196 aa).

The protein belongs to the imidazoleglycerol-phosphate dehydratase family.

It is found in the cytoplasm. The enzyme catalyses D-erythro-1-(imidazol-4-yl)glycerol 3-phosphate = 3-(imidazol-4-yl)-2-oxopropyl phosphate + H2O. It functions in the pathway amino-acid biosynthesis; L-histidine biosynthesis; L-histidine from 5-phospho-alpha-D-ribose 1-diphosphate: step 6/9. This is Imidazoleglycerol-phosphate dehydratase from Dehalococcoides mccartyi (strain ATCC BAA-2266 / KCTC 15142 / 195) (Dehalococcoides ethenogenes (strain 195)).